The sequence spans 260 residues: Ribosomal RNA small subunit methyltransferase G (260 aa).

Residues Gly-111, Phe-116, and Arg-181 each contribute to the S-adenosyl-L-methionine site.

This sequence belongs to the methyltransferase superfamily. RNA methyltransferase RsmG family.

It localises to the cytoplasm. It carries out the reaction guanosine(527) in 16S rRNA + S-adenosyl-L-methionine = N(7)-methylguanosine(527) in 16S rRNA + S-adenosyl-L-homocysteine. Its function is as follows. Specifically methylates the N7 position of guanine in position 527 of 16S rRNA. This is Ribosomal RNA small subunit methyltransferase G from Nitrobacter hamburgensis (strain DSM 10229 / NCIMB 13809 / X14).